A 305-amino-acid polypeptide reads, in one-letter code: Dermonecrotic toxin LiSicTox-betaID1 (305 aa).

The signal sequence occupies residues 1–18 (MQLFIILCLAGSAVQLEG). A propeptide spanning residues 19-26 (TELDGVER) is cleaved from the precursor. Residue histidine 38 is part of the active site. The Mg(2+) site is built by glutamate 58 and aspartate 60. The active-site Nucleophile is histidine 74. Cystine bridges form between cysteine 78–cysteine 84 and cysteine 80–cysteine 223. Mg(2+) is bound at residue aspartate 118.

The protein belongs to the arthropod phospholipase D family. Class II subfamily. Class IIb sub-subfamily. Requires Mg(2+) as cofactor. As to expression, expressed by the venom gland.

The protein localises to the secreted. It carries out the reaction an N-(acyl)-sphingosylphosphocholine = an N-(acyl)-sphingosyl-1,3-cyclic phosphate + choline. It catalyses the reaction an N-(acyl)-sphingosylphosphoethanolamine = an N-(acyl)-sphingosyl-1,3-cyclic phosphate + ethanolamine. The catalysed reaction is a 1-acyl-sn-glycero-3-phosphocholine = a 1-acyl-sn-glycero-2,3-cyclic phosphate + choline. The enzyme catalyses a 1-acyl-sn-glycero-3-phosphoethanolamine = a 1-acyl-sn-glycero-2,3-cyclic phosphate + ethanolamine. Its function is as follows. Dermonecrotic toxins cleave the phosphodiester linkage between the phosphate and headgroup of certain phospholipids (sphingolipid and lysolipid substrates), forming an alcohol (often choline) and a cyclic phosphate. This toxin acts on sphingomyelin (SM) with low activity. It may also act on ceramide phosphoethanolamine (CPE), lysophosphatidylcholine (LPC) and lysophosphatidylethanolamine (LPE), but not on lysophosphatidylserine (LPS), and lysophosphatidylglycerol (LPG). It acts by transphosphatidylation, releasing exclusively cyclic phosphate products as second products. Has no or weak activities in inducing dermonecrosis, hemolysis, inflammatory response, platelet aggregation and increase in vessel permeability. In vivo, shows no lethality when injected at higher dose into mice. In Loxosceles intermedia (Brown spider), this protein is Dermonecrotic toxin LiSicTox-betaID1.